Here is a 593-residue protein sequence, read N- to C-terminus: Methionine--tRNA ligase, mitochondrial (593 aa).

The transit peptide at 1-29 (MLRVSAFRLLGRRGASRVSLLEDFSFRYY) directs the protein to the mitochondrion. Positions 52-62 (FYVNAAPHIGH) match the 'HIGH' region motif. The 'KMSKS' region signature appears at 347–351 (KMSKS). Lys-350 contacts ATP.

Belongs to the class-I aminoacyl-tRNA synthetase family.

It is found in the mitochondrion matrix. It catalyses the reaction tRNA(Met) + L-methionine + ATP = L-methionyl-tRNA(Met) + AMP + diphosphate. This Bos taurus (Bovine) protein is Methionine--tRNA ligase, mitochondrial (MARS2).